The following is a 697-amino-acid chain: Elongation factor G (697 aa).

The tr-type G domain occupies 8–290 (ERYRNIGIMA…AVLSYMPSPV (283 aa)). GTP is bound by residues 17–24 (AHIDAGKT), 88–92 (DTPGH), and 142–145 (NKMD).

Belongs to the TRAFAC class translation factor GTPase superfamily. Classic translation factor GTPase family. EF-G/EF-2 subfamily.

Its subcellular location is the cytoplasm. Catalyzes the GTP-dependent ribosomal translocation step during translation elongation. During this step, the ribosome changes from the pre-translocational (PRE) to the post-translocational (POST) state as the newly formed A-site-bound peptidyl-tRNA and P-site-bound deacylated tRNA move to the P and E sites, respectively. Catalyzes the coordinated movement of the two tRNA molecules, the mRNA and conformational changes in the ribosome. The polypeptide is Elongation factor G (Nitrosococcus oceani (strain ATCC 19707 / BCRC 17464 / JCM 30415 / NCIMB 11848 / C-107)).